A 556-amino-acid polypeptide reads, in one-letter code: GDP-Man:Man(3)GlcNAc(2)-PP-Dol alpha-1,2-mannosyltransferase (556 aa).

The Lumenal portion of the chain corresponds to 1-7 (MANGLFT). Residues 8-28 (YVAISLFTIGPLLALFIPFVW) traverse the membrane as a helical segment. At 29–184 (RLVGSSLGWY…RWVLASTWPY (156 aa)) the chain is on the cytoplasmic side. Residues 64-79 (SKSAKGRKAEKEDRDT) are compositionally biased toward basic and acidic residues. Residues 64-86 (SKSAKGRKAEKEDRDTFNNTEAT) are disordered. The segment at residues 185–205 (FTLAGQSFGSLIMAWDAFSLL) is an intramembrane region (helical). At 206–454 (VPDIFVDTMG…VGVNGMWNEH (249 aa)) the chain is on the cytoplasmic side. The segment at residues 455-475 (FGIGVVEYQAAGLISVVHDSG) is an intramembrane region (helical). Residues 476–556 (GPKLDIVVEV…KAVEKPKSRQ (81 aa)) lie on the Cytoplasmic side of the membrane.

This sequence belongs to the glycosyltransferase group 1 family. Glycosyltransferase 4 subfamily.

The protein localises to the endoplasmic reticulum membrane. The catalysed reaction is an alpha-D-Man-(1-&gt;3)-[alpha-D-Man-(1-&gt;6)]-beta-D-Man-(1-&gt;4)-beta-D-GlcNAc-(1-&gt;4)-alpha-D-GlcNAc-diphospho-di-trans,poly-cis-dolichol + 2 GDP-alpha-D-mannose = an alpha-D-Man-(1-&gt;2)-alpha-D-Man-(1-&gt;2)-alpha-D-Man-(1-&gt;3)-[alpha-D-Man-(1-&gt;6)]-beta-D-Man-(1-&gt;4)-beta-D-GlcNAc-(1-&gt;4)-alpha-D-GlcNAc-diphospho-di-trans,poly-cis-dolichol + 2 GDP + 2 H(+). Its pathway is protein modification; protein glycosylation. GDP-Man:Man(3)GlcNAc(2)-PP-Dol alpha-1,2-mannosyltransferase that operates in the biosynthetic pathway of dolichol-linked oligosaccharides, the glycan precursors employed in protein asparagine (N)-glycosylation. The assembly of dolichol-linked oligosaccharides begins on the cytosolic side of the endoplasmic reticulum membrane and finishes in its lumen. The sequential addition of sugars to dolichol pyrophosphate produces dolichol-linked oligosaccharides containing fourteen sugars, including two GlcNAcs, nine mannoses and three glucoses. Once assembled, the oligosaccharide is transferred from the lipid to nascent proteins by oligosaccharyltransferases. Catalyzes, on the cytoplasmic face of the endoplasmic reticulum, the addition of the fourth and fifth mannose residues to the dolichol-linked oligosaccharide chain, to produce Man(5)GlcNAc(2)-PP-dolichol core oligosaccharide. In Neurospora crassa (strain ATCC 24698 / 74-OR23-1A / CBS 708.71 / DSM 1257 / FGSC 987), this protein is GDP-Man:Man(3)GlcNAc(2)-PP-Dol alpha-1,2-mannosyltransferase (alg-11).